A 517-amino-acid chain; its full sequence is GMP synthase [glutamine-hydrolyzing] (517 aa).

In terms of domain architecture, Glutamine amidotransferase type-1 spans 9–199 (RILILDFGSQ…VLNVCGCEGL (191 aa)). Cys86 functions as the Nucleophile in the catalytic mechanism. Active-site residues include His173 and Glu175. Positions 200–392 (WTSASIIEDA…LGLPYNMLYR (193 aa)) constitute a GMPS ATP-PPase domain. ATP is bound at residue 227 to 233 (SGGVDSS).

In terms of assembly, homodimer.

The enzyme catalyses XMP + L-glutamine + ATP + H2O = GMP + L-glutamate + AMP + diphosphate + 2 H(+). It participates in purine metabolism; GMP biosynthesis; GMP from XMP (L-Gln route): step 1/1. In terms of biological role, catalyzes the synthesis of GMP from XMP. This chain is GMP synthase [glutamine-hydrolyzing], found in Aliivibrio fischeri (strain ATCC 700601 / ES114) (Vibrio fischeri).